The chain runs to 780 residues: MKKRLPTLLASLIGSALYSQQALADLADQCLLGVPAYTKPLVSGDANSLPVHIQADKAAANYPEHALFSGNVYIEQGNSTLTADEVQLTQRQEQNNAPLRTATATGNVNYSSNEIKLQGPKAWSNLNTKDTDVYQGNYQIVGRQGRGDADTMKQRGDNRYTVLENGSFTSCLPGDDSWSVVGSEVIHDREEQVAEIWNARFKIGKVPVFYSPYLQIPVGDKRRSGFLIPNAKYGSNNGFEFSAPYYLNLAPNYDATIMPNYMSKRGTQIQTEFRYHTTPGEGLVEFDWLPKDRVYSSEHASDGDSDRWLLYWRHNGVMDQVWRFNVDYTKVSDSNYFDDLDSKYGSTTDGYATQKFSFGYADENWDTALSYKQFQVFDTNSSDAYRTAPQLDVTYYKNDVGPFDFKVFSQAAKFTNVNNSYPEATRLHIEPTLNLPLANRWGSLNTEAKLMATHYQQENIDEYNENTGTGRHLKGSVNRVLPQFKTDGKMVFERDMDYAPDYTQTLEPRLQYLYVPYRNQNDIGVYDSTILQTDYSGLFRDRTYSGLDRISSANQLAGGVTTRIYDDQRAERFNASVGQIYYFSRPRTGDITGTWDNYDNTGSVVWAGDSYWRISNQWGIRGGLQYDSRLNSVALGDAVLEYRRDENRILQLNYHYASPQYIEQMLSDISHTGYQQGISQVGVTGSWQLVDRWSLVGAYYYDTKANQPADQLVGLQYNTCCWAINVGYERKITGWNSTDSSSQYDNKVSFNIELRGLSSNYGLGTDKMLASGILPYQRAF.

Positions 1–24 (MKKRLPTLLASLIGSALYSQQALA) are cleaved as a signal peptide.

The protein belongs to the LptD family. As to quaternary structure, component of the lipopolysaccharide transport and assembly complex. Interacts with LptE and LptA.

Its subcellular location is the cell outer membrane. Functionally, together with LptE, is involved in the assembly of lipopolysaccharide (LPS) at the surface of the outer membrane. The sequence is that of LPS-assembly protein LptD from Sodalis glossinidius (strain morsitans).